Here is a 570-residue protein sequence, read N- to C-terminus: Sulfite reductase [NADPH] hemoprotein beta-component (570 aa).

The [4Fe-4S] cluster site is built by C434, C440, C479, and C483. C483 contacts siroheme.

It belongs to the nitrite and sulfite reductase 4Fe-4S domain family. In terms of assembly, alpha(8)-beta(8). The alpha component is a flavoprotein, the beta component is a hemoprotein. Siroheme serves as cofactor. Requires [4Fe-4S] cluster as cofactor.

The enzyme catalyses hydrogen sulfide + 3 NADP(+) + 3 H2O = sulfite + 3 NADPH + 4 H(+). Its pathway is sulfur metabolism; hydrogen sulfide biosynthesis; hydrogen sulfide from sulfite (NADPH route): step 1/1. Functionally, component of the sulfite reductase complex that catalyzes the 6-electron reduction of sulfite to sulfide. This is one of several activities required for the biosynthesis of L-cysteine from sulfate. In Salmonella arizonae (strain ATCC BAA-731 / CDC346-86 / RSK2980), this protein is Sulfite reductase [NADPH] hemoprotein beta-component.